A 674-amino-acid polypeptide reads, in one-letter code: Glutaminase kidney isoform, mitochondrial (674 aa).

The transit peptide at 1-54 (MMRLRGSAMLRELLLRPPAAVGAVLRRAQPLGTLCRRPRGGSRPTAGLVAAARL) directs the protein to the mitochondrion. The segment at 56–123 (PWWGGGGRAK…PGETDAFGNS (68 aa)) is disordered. Gly residues predominate over residues 58-71 (WGGGGRAKGPGAGG). Low complexity predominate over residues 89–101 (PPQQQQQQQQQPG). Residues K135 and K169 each carry the N6-succinyllysine modification. Position 291 (S291) interacts with substrate. Residue K316 is modified to N6-acetyllysine. The segment at 320–327 (GLRFNKLF) is highly mobile activation loop. Substrate contacts are provided by N340, E386, N393, Y419, Y471, and V489. ANK repeat units follow at residues 590–619 (DSRT…VNPF) and 624–653 (WNNT…QYTP). The disordered stretch occupies residues 652 to 674 (TPQGDSDDGKGNQTVHKNLDGLL). A Phosphoserine modification is found at S657.

It belongs to the glutaminase family. In terms of assembly, homotetramer, dimer of dimers. The tetramers can assemble into rod-like oligomers (in vitro), but the physiological significance of this is not clear. Interacts with RAF1 and MAP2K2. Interacts with ATCAY; the interaction is direct and may control GLS localization, negatively regulating its activity. Synthesized as a 74-kDa cytosolic precursor which is proteolytically processed by the mitochondrial-processing peptidase (MPP) via a 72-kDa intermediate to yield the mature mitochondrial 68- and 65-kDa subunits.

Its subcellular location is the mitochondrion. It is found in the cytoplasm. It localises to the cytosol. The protein localises to the mitochondrion matrix. The catalysed reaction is L-glutamine + H2O = L-glutamate + NH4(+). With respect to regulation, isoform 1 and isoform 2 are activated by phosphate, due to increased affinity for glutamine. At phosphate concentrations above 10 mM, isoform 2 is more efficient than isoform 1. Catalyzes the first reaction in the primary pathway for the renal catabolism of glutamine. Plays a role in maintaining acid-base homeostasis. Regulates the levels of the neurotransmitter glutamate, the main excitatory neurotransmitter in the brain. This chain is Glutaminase kidney isoform, mitochondrial (Gls), found in Mus musculus (Mouse).